We begin with the raw amino-acid sequence, 603 residues long: Cdc42-interacting protein 4 (603 aa).

The required for podosome formation and interaction with AKAP9 and microtubules stretch occupies residues 1 to 117; the sequence is MDWGTELWDQ…EMKQERKMHF (117 aa). The tract at residues 1–117 is required for translocation to the plasma membrane in response to insulin; the sequence is MDWGTELWDQ…EMKQERKMHF (117 aa). Residues 1 to 264 form the F-BAR domain; the sequence is MDWGTELWDQ…AAESVDAKND (264 aa). A coiled-coil region spans residues 67 to 259; sequence FSQQQSFVQL…EGMKVAAESV (193 aa). Positions 293 to 539 are interaction with CDC42; that stretch reads RVPSDSSLGT…YTEFDEDFEE (247 aa). Residues 293 to 603 form an interaction with PDE6G region; the sequence is RVPSDSSLGT…PTSYLRVTLN (311 aa). The interval 295-358 is disordered; it reads PSDSSLGTPD…PSSPRSGRDP (64 aa). Ser-296, Ser-298, and Ser-299 each carry phosphoserine. Basic residues predominate over residues 316 to 329; it reads SRAKRWPFGKKNKP. Positions 333-346 are enriched in low complexity; it reads SLSLLGGHLPSTLS. Phosphoserine is present on residues Ser-335 and Ser-351. A coiled-coil region spans residues 388–481; the sequence is TEDFSHLPPE…ESRVLSNRGD (94 aa). The 78-residue stretch at 393-470 folds into the REM-1 domain; the sequence is HLPPEQQRKR…VQKYEAWLAE (78 aa). The interval 471-603 is required for interaction with FASLG and localization to lysosomes; sequence AESRVLSNRG…PTSYLRVTLN (133 aa). The segment at 477-541 is disordered; it reads SNRGDSLSRH…EFDEDFEEPA (65 aa). A Phosphoserine modification is found at Ser-482. Positions 487-543 are interaction with DNM2 and WASL; that stretch reads ARPPDPPTTAPPDSSSSSTNSGSQDNKESSSEEPPSEGQDTPIYTEFDEDFEEPASP. Positions 497 to 510 are enriched in low complexity; that stretch reads PPDSSSSSTNSGSQ. Residues 532–603 are interaction with DNM1 and WASL; sequence EFDEDFEEPA…PTSYLRVTLN (72 aa). A required for podosome formation region spans residues 540 to 603; that stretch reads PASPIGQCVA…PTSYLRVTLN (64 aa). Positions 542–603 constitute an SH3 domain; it reads SPIGQCVAIY…PTSYLRVTLN (62 aa). The interaction with WAS stretch occupies residues 546–603; the sequence is QCVAIYHFEGSSEGTVSMSEGEDLSLMEEDKGDGWTRVRRKQGAEGYVPTSYLRVTLN. The interval 548 to 603 is interaction with ARHGAP17, DAAM1, DIAPH1 and DIAPH2; that stretch reads VAIYHFEGSSEGTVSMSEGEDLSLMEEDKGDGWTRVRRKQGAEGYVPTSYLRVTLN.

It belongs to the FNBP1 family. Homodimerizes, the dimers can polymerize end-to-end to form filamentous structures. Interacts with AKAP9, ARHGAP17, DAAM1, DIAPH1, DIAPH2, DNM1, FASLG/FASL, GAPVD1, LYN, microtubules, PDE6G, SRC and WAS/WASP. Interacts with the ligand binding domain of the thyroid receptor (TR) in the presence of thyroid hormone. May interact with CTNNB1 and HD/HTT. Interacts specifically with GTP-bound CDC42 and RHOQ. Interacts with DNM2 and WASL. In terms of processing, tyrosine phosphorylated. Also phosphorylated by PKA.

The protein resides in the cytoplasm. It localises to the cytoskeleton. Its subcellular location is the cell cortex. It is found in the lysosome. The protein localises to the golgi apparatus. The protein resides in the cell membrane. It localises to the cell projection. Its subcellular location is the phagocytic cup. Functionally, required to coordinate membrane tubulation with reorganization of the actin cytoskeleton during endocytosis. Binds to lipids such as phosphatidylinositol 4,5-bisphosphate and phosphatidylserine and promotes membrane invagination and the formation of tubules. Also promotes CDC42-induced actin polymerization by recruiting WASL/N-WASP which in turn activates the Arp2/3 complex. Actin polymerization may promote the fission of membrane tubules to form endocytic vesicles. Required for the formation of podosomes, actin-rich adhesion structures specific to monocyte-derived cells. May be required for the lysosomal retention of FASLG/FASL. Required for translocation of GLUT4 to the plasma membrane in response to insulin signaling. In Mus musculus (Mouse), this protein is Cdc42-interacting protein 4 (Trip10).